Reading from the N-terminus, the 291-residue chain is Pyridoxal 5'-phosphate synthase subunit PdxS (291 aa).

D23 provides a ligand contact to D-ribose 5-phosphate. The active-site Schiff-base intermediate with D-ribose 5-phosphate is K80. Position 152 (G152) interacts with D-ribose 5-phosphate. R164 contacts D-glyceraldehyde 3-phosphate. D-ribose 5-phosphate contacts are provided by residues G213 and 234–235; that span reads GS.

This sequence belongs to the PdxS/SNZ family. In terms of assembly, in the presence of PdxT, forms a dodecamer of heterodimers.

It catalyses the reaction aldehydo-D-ribose 5-phosphate + D-glyceraldehyde 3-phosphate + L-glutamine = pyridoxal 5'-phosphate + L-glutamate + phosphate + 3 H2O + H(+). It participates in cofactor biosynthesis; pyridoxal 5'-phosphate biosynthesis. In terms of biological role, catalyzes the formation of pyridoxal 5'-phosphate from ribose 5-phosphate (RBP), glyceraldehyde 3-phosphate (G3P) and ammonia. The ammonia is provided by the PdxT subunit. Can also use ribulose 5-phosphate and dihydroxyacetone phosphate as substrates, resulting from enzyme-catalyzed isomerization of RBP and G3P, respectively. This Bifidobacterium longum (strain NCC 2705) protein is Pyridoxal 5'-phosphate synthase subunit PdxS.